Consider the following 178-residue polypeptide: Single-stranded DNA-binding protein 2 (178 aa).

The 106-residue stretch at 6 to 111 (VNKVILVGNL…VVVSQSGTMQ (106 aa)) folds into the SSB domain. Residues 55-61 (WHRVVLY) mediate DNA binding. The interval 111–161 (QMLGGRNSAGSGQQQGGWGQPQQPAAPSHSGMPPQQHPANEPPMDFDDDIP) is disordered.

In terms of assembly, homotetramer.

In Salmonella typhi, this protein is Single-stranded DNA-binding protein 2 (ssb2).